The sequence spans 1141 residues: Serine-aspartate repeat-containing protein E (1141 aa).

An N-terminal signal peptide occupies residues 1–52; that stretch reads MINRDNKKAITKKGMISNRLNKFSIRKYTVGTASILVGTTLIFGLGNQEAKA. A YSIRK-G/S signaling motif motif is present at residues 23–34; sequence FSIRKYTVGTAS. The segment at 53–601 is ligand binding A region; sequence AENTSTENAK…GDGTVKPEEK (549 aa). Residues 54–225 form a disordered region; the sequence is ENTSTENAKQ…SKEELKNNPE (172 aa). A compositionally biased stretch (basic and acidic residues) spans 61-75; the sequence is AKQDDATTSDNKEVV. Positions 77–90 are enriched in low complexity; that stretch reads EAENNSTTENDSTN. Residues 92 to 109 show a composition bias toward basic and acidic residues; the sequence is IKKETNTDSQPEAKEEST. A compositionally biased stretch (low complexity) spans 110-126; that stretch reads KSSTQQQQNNVTATTET. The segment covering 130-145 has biased composition (basic and acidic residues); it reads NIEKENVKPSTDKTAT. A compositionally biased stretch (polar residues) spans 158–207; that stretch reads PNNTNNDVTTKPSTSEIQTKPTTPQESTNIENSQPQPTPSKVDNQVTDAT. Basic and acidic residues predominate over residues 216-225; it reads SKEELKNNPE. 3 CNA-B domains span residues 602 to 714, 715 to 824, and 825 to 935; these read LYKI…YKEP, KYNL…YKTP, and KYSL…EEDT. Residues 899 to 1117 form a disordered region; it reads VTNTTEDDKD…GSENNGSNNA (219 aa). Composition is skewed to acidic residues over residues 903-913 and 930-1080; these read TEDDKDADGGE and YFEE…DSDS. The short motif at 1104–1108 is the LPXTG sorting signal element; it reads LPETG. The residue at position 1107 (Thr1107) is a Pentaglycyl murein peptidoglycan amidated threonine. Positions 1108-1141 are cleaved as a propeptide — removed by sortase; it reads GSENNGSNNATLFGGLFAALGSLLLFGRRKKQNK.

Belongs to the serine-aspartate repeat-containing protein (SDr) family. Interacts with host complement factor H/CFAH (via C-terminus). Interacts with host complement regulator C4BPA.

The protein resides in the secreted. Its subcellular location is the cell wall. In terms of biological role, cell surface-associated calcium-binding protein which plays an important role in adhesion and pathogenesis. Contributes to the resistance to killing by innate immune components in blood and thus attenuates bacterial clearance by interacting with host complement factor H/CFAH and modulating its activity. Also inhibits bacterial opsonization and killing by interacting with host complement regulator C4BPA and thus inhibiting classical complement pathway activation. This Staphylococcus aureus (strain MSSA476) protein is Serine-aspartate repeat-containing protein E (sdrE).